A 388-amino-acid chain; its full sequence is Na(+)/H(+) antiporter NhaA (388 aa).

12 helical membrane-spanning segments follow: residues 8 to 28 (FLKLEAAGGLLLIITAIIALI), 33 to 53 (PLQGIYQQFLNISVAVQFAAL), 59 to 79 (LLLWINDGLMAVFFLIVGLEV), 95 to 115 (LFPVIAAIGGMVAPALIYLLF), 125 to 145 (GWAIPAATDIAFALGVMALLS), 154 to 174 (VFLLALAIIDDLGVIVIIALF), 179 to 199 (VSLVALGLSAAMIALLVWMNW), 217 to 237 (VCILKSGVHATLAGVIVGFLI), 259 to 279 (VAYLILPLFAFANAGVALNGV), 287 to 307 (ILPLGIAVALFLGKPLGIFLF), 328 to 348 (IFAVSVLCGIGFTMSIFISGL), and 363 to 383 (LGILMGSTIAAFMGYGLLRMV).

Belongs to the NhaA Na(+)/H(+) (TC 2.A.33) antiporter family.

Its subcellular location is the cell inner membrane. The catalysed reaction is Na(+)(in) + 2 H(+)(out) = Na(+)(out) + 2 H(+)(in). Na(+)/H(+) antiporter that extrudes sodium in exchange for external protons. The chain is Na(+)/H(+) antiporter NhaA from Photorhabdus laumondii subsp. laumondii (strain DSM 15139 / CIP 105565 / TT01) (Photorhabdus luminescens subsp. laumondii).